The primary structure comprises 183 residues: Ferredoxin-2, mitochondrial (183 aa).

The transit peptide at 1–52 (MAASMARGGVSARVLLQAARGTWWNRPGGTSGSGEGVALGTTRKFQATGSRP) directs the protein to the mitochondrion. Residues 45 to 65 (FQATGSRPAGEEDAGGPERPG) are disordered. Residues 68–170 (VNVVFVDRSG…GAEFTLPKIT (103 aa)) form the 2Fe-2S ferredoxin-type domain. The [2Fe-2S] cluster site is built by C105, C111, C114, and C151.

The protein belongs to the adrenodoxin/putidaredoxin family. In terms of assembly, component of the mitochondrial core iron-sulfur cluster (ISC) complex composed of NFS1, LYRM4, NDUFAB1, ISCU, FXN, and FDX2; this complex is a heterohexamer containing two copies of each monomer. Form a heterodimer complex with NFS1. Interacts (in both their reduced and oxidized states) with the cysteine desulfurase complex; this interaction stimulates cysteine desulfurase activity, and serves as a reductant for Fe-S cluster assembly. [2Fe-2S] cluster serves as cofactor. As to expression, widely expressed, with highest levels in testis, kidney and brain (at protein level). Expressed in muscle (at protein level). Expressed in fibroblasts (at protein level).

The protein resides in the mitochondrion. The protein localises to the mitochondrion matrix. Its function is as follows. Electron donor, of the core iron-sulfur cluster (ISC) assembly complex, that acts to reduce the persulfide into sulfide during [2Fe-2S] clusters assembly on the scaffolding protein ISCU. The core iron-sulfur cluster (ISC) assembly complex is involved in the de novo synthesis of a [2Fe-2S] cluster, the first step of the mitochondrial iron-sulfur protein biogenesis. This process is initiated by the cysteine desulfurase complex (NFS1:LYRM4:NDUFAB1) that produces persulfide which is delivered on the scaffold protein ISCU in a FXN-dependent manner. Then this complex is stabilized by FDX2 which provides reducing equivalents to accomplish the [2Fe-2S] cluster assembly. Finally, the [2Fe-2S] cluster is transferred from ISCU to chaperone proteins, including HSCB, HSPA9 and GLRX5. Essential for coenzyme Q biosynthesis: together with FDXR, transfers the electrons required for the hydroxylation reaction performed by COQ6. The polypeptide is Ferredoxin-2, mitochondrial (Homo sapiens (Human)).